Here is a 352-residue protein sequence, read N- to C-terminus: N-acetyl-gamma-glutamyl-phosphate reductase (352 aa).

Cys-151 is an active-site residue.

Belongs to the NAGSA dehydrogenase family. Type 1 subfamily.

The protein localises to the cytoplasm. The enzyme catalyses N-acetyl-L-glutamate 5-semialdehyde + phosphate + NADP(+) = N-acetyl-L-glutamyl 5-phosphate + NADPH + H(+). It participates in amino-acid biosynthesis; L-arginine biosynthesis; N(2)-acetyl-L-ornithine from L-glutamate: step 3/4. Functionally, catalyzes the NADPH-dependent reduction of N-acetyl-5-glutamyl phosphate to yield N-acetyl-L-glutamate 5-semialdehyde. This chain is N-acetyl-gamma-glutamyl-phosphate reductase, found in Renibacterium salmoninarum (strain ATCC 33209 / DSM 20767 / JCM 11484 / NBRC 15589 / NCIMB 2235).